Consider the following 389-residue polypeptide: D-alanyl-D-alanine carboxypeptidase DacF (389 aa).

An N-terminal signal peptide occupies residues 1–23 (MKRLLSTLLIGIMLLTFAPSAFA). The active-site Acyl-ester intermediate is Ser64. Lys67 serves as the catalytic Proton acceptor. The active site involves Ser124. Lys230 provides a ligand contact to substrate.

This sequence belongs to the peptidase S11 family.

It is found in the secreted. It catalyses the reaction Preferential cleavage: (Ac)2-L-Lys-D-Ala-|-D-Ala. Also transpeptidation of peptidyl-alanyl moieties that are N-acyl substituents of D-alanine.. Its pathway is cell wall biogenesis; peptidoglycan biosynthesis. Functionally, removes C-terminal D-alanyl residues from sugar-peptide cell wall precursors. In Bacillus subtilis (strain 168), this protein is D-alanyl-D-alanine carboxypeptidase DacF (dacF).